An 897-amino-acid chain; its full sequence is MEQPVIKEGTLALIDTFAYLFRSYYMSAKNKPLTNDKGFPTGLLTGLVGMVKKFYKDRKNMPFIVFALESQTKTKRAEKLGEYKQNRKDAPKEMLLQIPIALEWLQKMGFTCVEVGGFEADDVIASLATLSPYKTRIYSKDKDFNQLLSDKIALFDGKTEFLAKDCVEKYGILPSQFTDYQGIVGDSSDNYKGVKGIGSKNAKELLQRLGSLEKIYENLDLAKNLLSPKMYQALIQDKGSAFLSKELATLERGCIKEFDFLSCAFPSENPLLKIKDELKEYGFISTLRDLENSPFIVENVPILNSTPILDNTPALDNAPKKSRMIVLESAEPLSMFLEKLENPNARVFMRLVLDKDKKILALAFLLQDQGYFLPLEEALFSPFSLEFLQNAFSQMLQHACIIGHDLKPLLSFLKAKYQVPLENIRIQDTQILAFLKNPEKVGFDEVLKEYLKEDLIPHEKIKDFKTKSKAEKSELLSMELNALKRLCEYFEKGGLEEDLLTLARDIETPFVKVLMGMEFQGFKIDAPYFKRLEQEFKNELNVLERQILDLIGVDFNLNSPKQLGEVLYDKLGLPKNKSHSTDEKNLLKILDKHPSIPLILEYRELNKLFNTYTTPLLRLKDKDDKIHTTFIQTGTATGRLSSHSPNLQNIPVRSPKGLLIRKGFIASSKEYCLLGVDYSQIELRLLAHFSQDKDLMEAFLKGRDIHLETSKALFGEDLAKEKRSIAKSINFGLVYGMGSKKLSETLSIPLSEAKSYIEAYFKRFPSIKDYLNGMREEILKTSKAFTLLGRYRVFDFTGVNDYVKGNYLREGVNAIFQGSASDLLKLGMLKVSERFKNNPSVRLLLQVHDELIFEIEEKNAPELQQEIQRILNDEVYPLRVPLETSAFIAKRWNELKG.

Residues 1–317 form the 5'-3' exonuclease domain; sequence MEQPVIKEGT…ILDNTPALDN (317 aa). Residues 318 to 494 enclose the 3'-5' exonuclease domain; that stretch reads APKKSRMIVL…RLCEYFEKGG (177 aa). Residues 498 to 896 form a polymerase region; sequence DLLTLARDIE…FIAKRWNELK (399 aa).

It belongs to the DNA polymerase type-A family. As to quaternary structure, single-chain monomer with multiple functions.

The enzyme catalyses DNA(n) + a 2'-deoxyribonucleoside 5'-triphosphate = DNA(n+1) + diphosphate. In addition to polymerase activity, this DNA polymerase exhibits 3'-5' and 5'-3' exonuclease activity. The protein is DNA polymerase I (polA) of Helicobacter pylori (strain J99 / ATCC 700824) (Campylobacter pylori J99).